The primary structure comprises 339 residues: Biotin synthase (339 aa).

One can recognise a Radical SAM core domain in the interval 53 to 271 (NAIQMSRLLS…IALARILMPR (219 aa)). The [4Fe-4S] cluster site is built by C68, C72, and C75. [2Fe-2S] cluster contacts are provided by C112, C143, C203, and R275.

Belongs to the radical SAM superfamily. Biotin synthase family. As to quaternary structure, homodimer. [4Fe-4S] cluster is required as a cofactor. The cofactor is [2Fe-2S] cluster.

The catalysed reaction is (4R,5S)-dethiobiotin + (sulfur carrier)-SH + 2 reduced [2Fe-2S]-[ferredoxin] + 2 S-adenosyl-L-methionine = (sulfur carrier)-H + biotin + 2 5'-deoxyadenosine + 2 L-methionine + 2 oxidized [2Fe-2S]-[ferredoxin]. It functions in the pathway cofactor biosynthesis; biotin biosynthesis; biotin from 7,8-diaminononanoate: step 2/2. Its function is as follows. Catalyzes the conversion of dethiobiotin (DTB) to biotin by the insertion of a sulfur atom into dethiobiotin via a radical-based mechanism. This chain is Biotin synthase, found in Agrobacterium fabrum (strain C58 / ATCC 33970) (Agrobacterium tumefaciens (strain C58)).